The primary structure comprises 92 residues: Co-chaperonin GroES (92 aa).

Belongs to the GroES chaperonin family. In terms of assembly, heptamer of 7 subunits arranged in a ring. Interacts with the chaperonin GroEL.

It is found in the cytoplasm. Together with the chaperonin GroEL, plays an essential role in assisting protein folding. The GroEL-GroES system forms a nano-cage that allows encapsulation of the non-native substrate proteins and provides a physical environment optimized to promote and accelerate protein folding. GroES binds to the apical surface of the GroEL ring, thereby capping the opening of the GroEL channel. This chain is Co-chaperonin GroES, found in Thermotoga maritima (strain ATCC 43589 / DSM 3109 / JCM 10099 / NBRC 100826 / MSB8).